The chain runs to 852 residues: Bifunctional uridylyltransferase/uridylyl-removing enzyme (852 aa).

The uridylyltransferase stretch occupies residues 1-318 (MPANLSSALE…SAPMRVTLRI (318 aa)). The tract at residues 319-672 (DDDYIQVNNQ…SRILFKSDSF (354 aa)) is uridylyl-removing. In terms of domain architecture, HD spans 436–558 (VDDHILTVVR…VQTHERLSAL (123 aa)). 2 ACT domains span residues 673–757 (QVMV…SHSR) and 785–852 (SVEI…EQLS).

The protein belongs to the GlnD family. It depends on Mg(2+) as a cofactor.

It catalyses the reaction [protein-PII]-L-tyrosine + UTP = [protein-PII]-uridylyl-L-tyrosine + diphosphate. The catalysed reaction is [protein-PII]-uridylyl-L-tyrosine + H2O = [protein-PII]-L-tyrosine + UMP + H(+). With respect to regulation, uridylyltransferase (UTase) activity is inhibited by glutamine, while glutamine activates uridylyl-removing (UR) activity. In terms of biological role, modifies, by uridylylation and deuridylylation, the PII regulatory proteins (GlnB and homologs), in response to the nitrogen status of the cell that GlnD senses through the glutamine level. Under low glutamine levels, catalyzes the conversion of the PII proteins and UTP to PII-UMP and PPi, while under higher glutamine levels, GlnD hydrolyzes PII-UMP to PII and UMP (deuridylylation). Thus, controls uridylylation state and activity of the PII proteins, and plays an important role in the regulation of nitrogen assimilation and metabolism. The sequence is that of Bifunctional uridylyltransferase/uridylyl-removing enzyme from Neisseria meningitidis serogroup A / serotype 4A (strain DSM 15465 / Z2491).